The following is a 1373-amino-acid chain: Disease resistance protein RRS1 (1373 aa).

Residues Glu-5 to His-146 form the TIR domain. The region spanning Ile-170–His-421 is the NB-ARC domain. Gly-179–Thr-186 is an ATP binding site. 9 LRR repeats span residues Ser-498–Asn-522, Asn-535–Pro-553, Asn-554–Pro-575, His-577–Leu-598, Ala-621–Arg-646, Pro-665–Pro-688, Leu-742–Gly-766, Pro-768–Ile-793, and Pro-831–Leu-854. The Nuclear localization signal signature appears at Arg-988–Asp-1005. A DNA-binding region (WRKY) is located at residues Ile-1204–Pro-1272. The tract at residues Arg-1300–Ala-1323 is disordered.

Interacts with PopP2, a R.solanacearum type III effector.

The protein resides in the nucleus. Its function is as follows. Transcription factor. Interacts specifically with the W box (5'-(T)TGAC[CT]-3'), a frequently occurring elicitor-responsive cis-acting element. Also acts as a disease resistance protein involved in resistance to fungal and bacterial pathogens, including R.solanacearum, P.syringae pv. tomato and C.higginsianum. In presence of RPS4, elicites an EDS1-dependent hypersensitive response. The protein is Disease resistance protein RRS1 of Arabidopsis thaliana (Mouse-ear cress).